A 295-amino-acid chain; its full sequence is Large ribosomal subunit protein uL18 (295 aa).

Residues 251-261 (PTPKKKTDFAG) are compositionally biased toward basic and acidic residues. The interval 251-295 (PTPKKKTDFAGKTKRWNRKKMTFSQRRDRVKQKKASFLRAKQQEG) is disordered. A compositionally biased stretch (basic residues) spans 262 to 271 (KTKRWNRKKM).

The protein belongs to the universal ribosomal protein uL18 family. As to quaternary structure, component of the large ribosomal subunit (LSU).

The protein localises to the cytoplasm. Its subcellular location is the nucleus. Component of the ribosome, a large ribonucleoprotein complex responsible for the synthesis of proteins in the cell. The small ribosomal subunit (SSU) binds messenger RNAs (mRNAs) and translates the encoded message by selecting cognate aminoacyl-transfer RNA (tRNA) molecules. The large subunit (LSU) contains the ribosomal catalytic site termed the peptidyl transferase center (PTC), which catalyzes the formation of peptide bonds, thereby polymerizing the amino acids delivered by tRNAs into a polypeptide chain. The nascent polypeptides leave the ribosome through a tunnel in the LSU and interact with protein factors that function in enzymatic processing, targeting, and the membrane insertion of nascent chains at the exit of the ribosomal tunnel. The chain is Large ribosomal subunit protein uL18 (RPL5) from Styela clava (Sea squirt).